Reading from the N-terminus, the 76-residue chain is Small ribosomal subunit protein bS16 (76 aa).

This sequence belongs to the bacterial ribosomal protein bS16 family.

The sequence is that of Small ribosomal subunit protein bS16 from Sulfurovum sp. (strain NBC37-1).